We begin with the raw amino-acid sequence, 1040 residues long: MAASLPSTLSFSSAPDEIQHPQIKFSEWKFKLFRVRSFEKAPEEAQKEKDSSEGKPYLEQSPVVPEKPGGQNSILTQRALKLHPKFSKKFHADGKSSDKAVHQARLRHFCRICGNRFKSDGHSRRYPVHGPVDAKTQSLFRKKEKRVTSWPDLIARIFRIDVKADVDSIHPTEFCHDCWSIMHRKFSSSHSQVYFPRKVTVEWHPHTPSCDICFTAHRGLKRKRHQPNVQLSKKLKTVLNHARRDRRKRTQARVSSKEVLKKISNCSKIHLSTKLLAVDFPAHFVKSISCQICEHILADPVETSCKHLFCRICILRCLKVMGSYCPSCRYPCFPTDLESPVKSFLNILNSLMVKCPAQDCNEEVSLEKYNHHVSSHKESKETLVHINKGGRPRQHLLSLTRRAQKHRLRELKIQVKEFADKEEGGDVKAVCLTLFLLALRARNEHRQADELEAIMQGRGSGLQPAVCLAIRVNTFLSCSQYHKMYRTVKAITGRQIFQPLHALRNAEKVLLPGYHPFEWQPPLKNVSSRTDVGIIDGLSGLASSVDEYPVDTIAKRFRYDSALVSALMDMEEDILEGMRSQDLDDYLNGPFTVVVKESCDGMGDVSEKHGSGPAVPEKAVRFSFTVMRITIEHGSQNVKVFEEPKPNSELCCKPLCLMLADESDHETLTAILSPLIAEREAMKSSELTLEMGGIPRTFKFIFRGTGYDEKLVREVEGLEASGSVYICTLCDTTRLEASQNLVFHSITRSHAENLQRYEVWRSNPYHESVEELRDRVKGVSAKPFIETVPSIDALHCDIGNAAEFYKIFQLEIGEVYKHPNASKEERKRWQATLDKHLRKRMNLKPIMRMNGNFARKLMTQETVDAVCELIPSEERHEALRELMDLYLKMKPVWRSSCPAKECPESLCQYSFNSQRFAELLSTKFKYRYEGKITNYFHKTLAHVPEIIERDGSIGAWASEGNESGNKLFRRFRKMNARQSKCYEMEDVLKHHWLYTSKYLQKFMNAHNALKSSGFTMNSKETLGDPLGIEDSLESQDSMEF.

A compositionally biased stretch (basic and acidic residues) spans 39–53 (EKAPEEAQKEKDSSE). Residues 39–71 (EKAPEEAQKEKDSSEGKPYLEQSPVVPEKPGGQ) are disordered. Lys-233 participates in a covalent cross-link: Glycyl lysine isopeptide (Lys-Gly) (interchain with G-Cter in ubiquitin). Positions 266, 270, 290, 293, 295, 305, 307, 310, 313, 325, 328, 355, 360, 372, and 376 each coordinate Zn(2+). Residues 290–329 (CQICEHILADPVETSCKHLFCRICILRCLKVMGSYCPSCR) form an RING-type zinc finger. The RAG1-type zinc finger occupies 351–380 (LMVKCPAQDCNEEVSLEKYNHHVSSHKESK). Positions 389-456 (GGRPRQHLLS…QADELEAIMQ (68 aa)) form a DNA-binding region, NBD. Residues Asp-600, Asp-708, and Glu-962 each contribute to the a divalent metal cation site.

It belongs to the RAG1 family. In terms of assembly, homodimer. Component of the RAG complex composed of core components RAG1 and RAG2, and associated component HMGB1 or HMGB2. Interacts with DCAF1, leading to recruitment of the CUL4A-RBX1-DDB1-DCAF1/VPRBP complex to ubiquitinate proteins and limit error-prone repair during V(D)J recombination. Mg(2+) is required as a cofactor. The cofactor is Mn(2+). Autoubiquitinated in the presence of CDC34/UBCH3. Maturing lymphoid cells and central nervous system.

Its subcellular location is the nucleus. The enzyme catalyses S-ubiquitinyl-[E2 ubiquitin-conjugating enzyme]-L-cysteine + [acceptor protein]-L-lysine = [E2 ubiquitin-conjugating enzyme]-L-cysteine + N(6)-ubiquitinyl-[acceptor protein]-L-lysine.. Its function is as follows. Catalytic component of the RAG complex, a multiprotein complex that mediates the DNA cleavage phase during V(D)J recombination. V(D)J recombination assembles a diverse repertoire of immunoglobulin and T-cell receptor genes in developing B and T-lymphocytes through rearrangement of different V (variable), in some cases D (diversity), and J (joining) gene segments. In the RAG complex, RAG1 mediates the DNA-binding to the conserved recombination signal sequences (RSS) and catalyzes the DNA cleavage activities by introducing a double-strand break between the RSS and the adjacent coding segment. RAG2 is not a catalytic component but is required for all known catalytic activities. DNA cleavage occurs in 2 steps: a first nick is introduced in the top strand immediately upstream of the heptamer, generating a 3'-hydroxyl group that can attack the phosphodiester bond on the opposite strand in a direct transesterification reaction, thereby creating 4 DNA ends: 2 hairpin coding ends and 2 blunt, 5'-phosphorylated ends. The chromatin structure plays an essential role in the V(D)J recombination reactions and the presence of histone H3 trimethylated at 'Lys-4' (H3K4me3) stimulates both the nicking and haipinning steps. The RAG complex also plays a role in pre-B cell allelic exclusion, a process leading to expression of a single immunoglobulin heavy chain allele to enforce clonality and monospecific recognition by the B-cell antigen receptor (BCR) expressed on individual B-lymphocytes. The introduction of DNA breaks by the RAG complex on one immunoglobulin allele induces ATM-dependent repositioning of the other allele to pericentromeric heterochromatin, preventing accessibility to the RAG complex and recombination of the second allele. In addition to its endonuclease activity, RAG1 also acts as an E3 ubiquitin-protein ligase that mediates monoubiquitination of histone H3. Histone H3 monoubiquitination is required for the joining step of V(D)J recombination. Mediates polyubiquitination of KPNA1. The sequence is that of V(D)J recombination-activating protein 1 (Rag1) from Mus musculus (Mouse).